Consider the following 148-residue polypeptide: Small ribosomal subunit protein uS15 (148 aa).

Belongs to the universal ribosomal protein uS15 family.

The protein is Small ribosomal subunit protein uS15 (RPS13) of Encephalitozoon cuniculi (strain GB-M1) (Microsporidian parasite).